A 384-amino-acid chain; its full sequence is G protein-coupled receptor 88 (384 aa).

The Extracellular portion of the chain corresponds to 1-35 (MTNSSSTSTSSTTGGSLLLLCEEEESWAGRRIPVS). N3 is a glycosylation site (N-linked (GlcNAc...) asparagine). Residues 36–56 (LLYSGLAIGGTLANGMVIYLV) form a helical membrane-spanning segment. The Cytoplasmic portion of the chain corresponds to 57-73 (SSFRKLQTTSNAFIVNG). Residues 74 to 94 (CAADLSVCALWMPQEAVLGLL) traverse the membrane as a helical segment. Over 95 to 116 (PTGSAEPPADWDGAGGSYRLLR) the chain is Extracellular. A helical transmembrane segment spans residues 117–136 (GGLLGLGLTVSLLSHCLVAL). Topologically, residues 137–158 (NRYLLITRAPATYQALYQRRHT) are cytoplasmic. A helical membrane pass occupies residues 159–179 (AGMLALSWALALGLVLLLPPW). The Extracellular segment spans residues 180 to 195 (APRPGAAPPRVHYPAL). A helical membrane pass occupies residues 196 to 216 (LAAAALLAQTALLLHCYLGIV). At 217-285 (RRVRVSVKRV…RAQRRLSGLS (69 aa)) the chain is on the cytoplasmic side. The helical transmembrane segment at 286–306 (VLLLCCVFLLATQPLVWVSLA) threads the bilayer. Residues 307–310 (SGFS) are Extracellular-facing. A helical membrane pass occupies residues 311–331 (LPVPWGVQAASWLLCCALSAL). Over 332–384 (NPLLYTWRNEEFRRSVRSVLPGVGDAAAAAVAATAVPAVSQAQLGTRAAGQHW) the chain is Cytoplasmic.

The protein belongs to the G-protein coupled receptor 1 family. In terms of tissue distribution, expressed predominantly in the striatum.

The protein localises to the cell membrane. Its subcellular location is the cell projection. It is found in the cilium membrane. It localises to the cytoplasm. The protein resides in the nucleus. In terms of biological role, orphan G protein-coupled receptor implicated in a large repertoire of behavioral responses that engage motor activities, spatial learning, and emotional processing. May play a role in the regulation of cognitive and motor function. Couples with the heterotrimeric G protein complex of the G(i) subfamily, consisting of GNAI1, GNB1 and GNG2, thereby acting through a G(i)-mediated pathway. Plays a role in the attenuation of D1 dopamine receptor (D1R)-mediated cAMP response in ciliated cells. In non-ciliated cells, involved in the inhibition of the beta-2 adrenergic receptor (B2AR) response. This is G protein-coupled receptor 88 (GPR88) from Homo sapiens (Human).